Consider the following 892-residue polypeptide: Inner centromere protein B (892 aa).

Disordered regions lie at residues alanine 50–threonine 124, glutamate 160–threonine 182, leucine 255–valine 286, lysine 305–histidine 470, lysine 502–aspartate 555, glutamine 569–glutamate 687, glutamate 702–alanine 760, and asparagine 797–proline 819. The span at serine 60 to threonine 69 shows a compositional bias: basic residues. The segment covering serine 90–arginine 99 has biased composition (low complexity). Residues glutamine 259–glycine 272 show a composition bias toward polar residues. Residues lysine 305–arginine 315 show a composition bias toward basic and acidic residues. Residues lysine 316–lysine 326 show a composition bias toward basic residues. The segment covering serine 332–serine 343 has biased composition (low complexity). A compositionally biased stretch (basic and acidic residues) spans arginine 431 to glutamate 444. The span at proline 455–histidine 470 shows a compositional bias: pro residues. 4 stretches are compositionally biased toward basic and acidic residues: residues proline 509–aspartate 555, glutamine 569–alanine 602, lysine 609–glutamate 687, and glutamate 702–glutamate 754. Positions lysine 512–glutamine 725 are SAH. Residues leucine 802–proline 876 are IN box. Serine 869 and serine 870 each carry phosphoserine.

Belongs to the INCENP family. In terms of assembly, component of the CPC at least composed of survivin/birc5, incenp, cdca8/borealin and/or cdca9/dasra-A, and aurkb/aurora-B. Interacts (via C-terminus) with aurkb (via N-terminus and kinase domain). Interacts (via N-terminus) with birc5.1, birc5.2, cdca8 and cdca9. Interacts with mtus1.

The protein localises to the nucleus. Its subcellular location is the chromosome. It localises to the centromere. It is found in the cytoplasm. The protein resides in the cytoskeleton. The protein localises to the spindle. Its subcellular location is the midbody. It localises to the kinetochore. Component of the chromosomal passenger complex (CPC), a complex that acts as a key regulator of mitosis. The CPC complex has essential functions at the centromere in ensuring correct chromosome alignment and segregation and is required for chromatin-induced microtubule stabilization and spindle assembly. Acts as a scaffold regulating CPC localization and activity. The C-terminus associates with aurkb/aurora-B, the N-terminus associated with cdca8/borealin and/or cdca9/dasra-A tethers the CPC to the inner centromere, and the microtubule binding activity within the central SAH domain directs aurkb/aurora-B toward substrates near microtubules. Activates aurkb. This is Inner centromere protein B (incenp-b) from Xenopus laevis (African clawed frog).